The sequence spans 354 residues: Ribosomal RNA large subunit methyltransferase M (354 aa).

Residues S183, 216–219 (SPGG), D235, D255, and D271 each bind S-adenosyl-L-methionine. K300 serves as the catalytic Proton acceptor.

The protein belongs to the class I-like SAM-binding methyltransferase superfamily. RNA methyltransferase RlmE family. RlmM subfamily. Monomer.

It localises to the cytoplasm. It catalyses the reaction cytidine(2498) in 23S rRNA + S-adenosyl-L-methionine = 2'-O-methylcytidine(2498) in 23S rRNA + S-adenosyl-L-homocysteine + H(+). Functionally, catalyzes the 2'-O-methylation at nucleotide C2498 in 23S rRNA. The sequence is that of Ribosomal RNA large subunit methyltransferase M from Pseudomonas entomophila (strain L48).